A 353-amino-acid polypeptide reads, in one-letter code: Aliphatic aldoxime dehydratase (353 aa).

Ser219 contributes to the an aliphatic aldoxime binding site. Residue His299 participates in heme b binding. His320 is an an aliphatic aldoxime binding site. The active site involves His320.

It belongs to the heme-containing dehydratase family. As to quaternary structure, homodimer. The cofactor is heme b.

The catalysed reaction is an aliphatic aldoxime = a nitrile + H2O. With respect to regulation, active when the heme iron is in the ferrous state. Activated by FMN, Fe(2+), Sn(2+), Na(2)SO(3), Na(2)S and vitamin K3. In terms of biological role, catalyzes the dehydration of aldoximes to their corresponding nitrile. Is active toward various arylalkyl- and alkyl-aldoximes, and to a lesser extent toward aryl-aldoximes. The chain is Aliphatic aldoxime dehydratase from Rhodococcus globerulus.